The sequence spans 295 residues: Bifunctional protein FolD (295 aa).

NADP(+) is bound by residues 167–169 (GRS), serine 192, and isoleucine 233.

The protein belongs to the tetrahydrofolate dehydrogenase/cyclohydrolase family. Homodimer.

The enzyme catalyses (6R)-5,10-methylene-5,6,7,8-tetrahydrofolate + NADP(+) = (6R)-5,10-methenyltetrahydrofolate + NADPH. It catalyses the reaction (6R)-5,10-methenyltetrahydrofolate + H2O = (6R)-10-formyltetrahydrofolate + H(+). Its pathway is one-carbon metabolism; tetrahydrofolate interconversion. Functionally, catalyzes the oxidation of 5,10-methylenetetrahydrofolate to 5,10-methenyltetrahydrofolate and then the hydrolysis of 5,10-methenyltetrahydrofolate to 10-formyltetrahydrofolate. The chain is Bifunctional protein FolD from Paramagnetospirillum magneticum (strain ATCC 700264 / AMB-1) (Magnetospirillum magneticum).